The primary structure comprises 189 residues: GTP cyclohydrolase 1 (189 aa).

The Zn(2+) site is built by cysteine 76, histidine 79, and cysteine 149.

This sequence belongs to the GTP cyclohydrolase I family. As to quaternary structure, homomer.

The catalysed reaction is GTP + H2O = 7,8-dihydroneopterin 3'-triphosphate + formate + H(+). The protein operates within cofactor biosynthesis; 7,8-dihydroneopterin triphosphate biosynthesis; 7,8-dihydroneopterin triphosphate from GTP: step 1/1. The protein is GTP cyclohydrolase 1 of Dehalococcoides mccartyi (strain ATCC BAA-2100 / JCM 16839 / KCTC 5957 / BAV1).